Reading from the N-terminus, the 404-residue chain is Probable tRNA sulfurtransferase (404 aa).

Residues E60–T165 enclose the THUMP domain. Residues M183–L184, H208–F209, R265, G287, and Q296 each bind ATP.

This sequence belongs to the ThiI family.

Its subcellular location is the cytoplasm. The catalysed reaction is [ThiI sulfur-carrier protein]-S-sulfanyl-L-cysteine + a uridine in tRNA + 2 reduced [2Fe-2S]-[ferredoxin] + ATP + H(+) = [ThiI sulfur-carrier protein]-L-cysteine + a 4-thiouridine in tRNA + 2 oxidized [2Fe-2S]-[ferredoxin] + AMP + diphosphate. The enzyme catalyses [ThiS sulfur-carrier protein]-C-terminal Gly-Gly-AMP + S-sulfanyl-L-cysteinyl-[cysteine desulfurase] + AH2 = [ThiS sulfur-carrier protein]-C-terminal-Gly-aminoethanethioate + L-cysteinyl-[cysteine desulfurase] + A + AMP + 2 H(+). It participates in cofactor biosynthesis; thiamine diphosphate biosynthesis. Catalyzes the ATP-dependent transfer of a sulfur to tRNA to produce 4-thiouridine in position 8 of tRNAs, which functions as a near-UV photosensor. Also catalyzes the transfer of sulfur to the sulfur carrier protein ThiS, forming ThiS-thiocarboxylate. This is a step in the synthesis of thiazole, in the thiamine biosynthesis pathway. The sulfur is donated as persulfide by IscS. The sequence is that of Probable tRNA sulfurtransferase from Enterococcus faecalis (strain ATCC 700802 / V583).